A 144-amino-acid polypeptide reads, in one-letter code: Transcription antitermination protein NusB (144 aa).

This sequence belongs to the NusB family.

In terms of biological role, involved in transcription antitermination. Required for transcription of ribosomal RNA (rRNA) genes. Binds specifically to the boxA antiterminator sequence of the ribosomal RNA (rrn) operons. The polypeptide is Transcription antitermination protein NusB (Leifsonia xyli subsp. xyli (strain CTCB07)).